The sequence spans 243 residues: Uridylate kinase (243 aa).

18 to 21 (KLGG) contacts ATP. Gly59 serves as a coordination point for UMP. The ATP site is built by Gly60 and Arg64. UMP contacts are provided by residues Asp79 and 140 to 147 (MGMPYFST). Tyr173 and Asp176 together coordinate ATP.

Belongs to the UMP kinase family. Homohexamer.

The protein resides in the cytoplasm. The catalysed reaction is UMP + ATP = UDP + ADP. It functions in the pathway pyrimidine metabolism; CTP biosynthesis via de novo pathway; UDP from UMP (UMPK route): step 1/1. Inhibited by UTP. Catalyzes the reversible phosphorylation of UMP to UDP. This is Uridylate kinase from Corynebacterium diphtheriae (strain ATCC 700971 / NCTC 13129 / Biotype gravis).